The primary structure comprises 200 residues: 3-isopropylmalate dehydratase small subunit (200 aa).

The protein belongs to the LeuD family. LeuD type 1 subfamily. As to quaternary structure, heterodimer of LeuC and LeuD.

The enzyme catalyses (2R,3S)-3-isopropylmalate = (2S)-2-isopropylmalate. It functions in the pathway amino-acid biosynthesis; L-leucine biosynthesis; L-leucine from 3-methyl-2-oxobutanoate: step 2/4. Its function is as follows. Catalyzes the isomerization between 2-isopropylmalate and 3-isopropylmalate, via the formation of 2-isopropylmaleate. This is 3-isopropylmalate dehydratase small subunit from Campylobacter jejuni subsp. jejuni serotype O:6 (strain 81116 / NCTC 11828).